A 187-amino-acid polypeptide reads, in one-letter code: Protein dj-1beta (187 aa).

Residue C45 is modified to Cysteine sulfinic acid (-SO2H). The active-site Nucleophile is the C104. The residue at position 104 (C104) is a Cysteine sulfinic acid (-SO2H); alternate.

Post-translationally, oxidation of Cys-45 and Cys-104 in response to oxidative stress. Levels of oxidation increase with age. As to expression, expressed in the head and testis (at protein level). Ubiquitously expressed at constant levels.

It is found in the mitochondrion. The protein resides in the cytoplasm. The protein localises to the nucleus. Functionally, plays an important role in cell protection against oxidative stress and cell death by acting as a oxidative stress sensor. Does not play a role in methylglyoxal detoxification. Plays a role in mitochondrial function together with Pink1. In motor neurons regulates structural synaptic plasticity of locomotor behavior as part of the PTEN-phosphatidylinositol 3-kinase pathway in response to oxygen species (ROS) levels. This chain is Protein dj-1beta, found in Drosophila melanogaster (Fruit fly).